The chain runs to 476 residues: Aspartyl/glutamyl-tRNA(Asn/Gln) amidotransferase subunit B (476 aa).

This sequence belongs to the GatB/GatE family. GatB subfamily. Heterotrimer of A, B and C subunits.

It carries out the reaction L-glutamyl-tRNA(Gln) + L-glutamine + ATP + H2O = L-glutaminyl-tRNA(Gln) + L-glutamate + ADP + phosphate + H(+). The enzyme catalyses L-aspartyl-tRNA(Asn) + L-glutamine + ATP + H2O = L-asparaginyl-tRNA(Asn) + L-glutamate + ADP + phosphate + 2 H(+). Allows the formation of correctly charged Asn-tRNA(Asn) or Gln-tRNA(Gln) through the transamidation of misacylated Asp-tRNA(Asn) or Glu-tRNA(Gln) in organisms which lack either or both of asparaginyl-tRNA or glutaminyl-tRNA synthetases. The reaction takes place in the presence of glutamine and ATP through an activated phospho-Asp-tRNA(Asn) or phospho-Glu-tRNA(Gln). This chain is Aspartyl/glutamyl-tRNA(Asn/Gln) amidotransferase subunit B, found in Nitratidesulfovibrio vulgaris (strain ATCC 29579 / DSM 644 / CCUG 34227 / NCIMB 8303 / VKM B-1760 / Hildenborough) (Desulfovibrio vulgaris).